Consider the following 217-residue polypeptide: Probable transaldolase (217 aa).

Catalysis depends on lysine 83, which acts as the Schiff-base intermediate with substrate.

It belongs to the transaldolase family. Type 3B subfamily.

Its subcellular location is the cytoplasm. It catalyses the reaction D-sedoheptulose 7-phosphate + D-glyceraldehyde 3-phosphate = D-erythrose 4-phosphate + beta-D-fructose 6-phosphate. The protein operates within carbohydrate degradation; pentose phosphate pathway; D-glyceraldehyde 3-phosphate and beta-D-fructose 6-phosphate from D-ribose 5-phosphate and D-xylulose 5-phosphate (non-oxidative stage): step 2/3. In terms of biological role, transaldolase is important for the balance of metabolites in the pentose-phosphate pathway. The sequence is that of Probable transaldolase from Anaeromyxobacter sp. (strain K).